The following is a 310-amino-acid chain: Acetaldehyde dehydrogenase 1 (310 aa).

NAD(+) is bound at residue 12–15; it reads SGNI. Cys-127 serves as the catalytic Acyl-thioester intermediate. NAD(+) is bound by residues 163 to 171 and Asn-282; that span reads SAGPGTRAN.

This sequence belongs to the acetaldehyde dehydrogenase family.

It catalyses the reaction acetaldehyde + NAD(+) + CoA = acetyl-CoA + NADH + H(+). This Mycobacterium sp. (strain KMS) protein is Acetaldehyde dehydrogenase 1.